The primary structure comprises 777 residues: Ribosome-releasing factor 2, mitochondrial (777 aa).

Positions 68–353 (AKIRNIGIMA…AITMYLPSPE (286 aa)) constitute a tr-type G domain. GTP is bound by residues 77 to 84 (AHIDAGKT), 141 to 145 (DTPGH), and 195 to 198 (NKMD).

It belongs to the TRAFAC class translation factor GTPase superfamily. Classic translation factor GTPase family. EF-G/EF-2 subfamily.

It localises to the mitochondrion. The enzyme catalyses GTP + H2O = GDP + phosphate + H(+). Its function is as follows. Mitochondrial GTPase that mediates the disassembly of ribosomes from messenger RNA at the termination of mitochondrial protein biosynthesis. Acts in collaboration with MRRF. GTP hydrolysis follows the ribosome disassembly and probably occurs on the ribosome large subunit. Not involved in the GTP-dependent ribosomal translocation step during translation elongation. The chain is Ribosome-releasing factor 2, mitochondrial from Bos taurus (Bovine).